Reading from the N-terminus, the 599-residue chain is Elongation factor 4 (599 aa).

A tr-type G domain is found at 2-185 (ENIRNFSIIA…AITKRIPPPK (184 aa)). GTP-binding positions include 14-19 (DHGKST) and 132-135 (NKID).

It belongs to the TRAFAC class translation factor GTPase superfamily. Classic translation factor GTPase family. LepA subfamily.

It localises to the cell inner membrane. The enzyme catalyses GTP + H2O = GDP + phosphate + H(+). Its function is as follows. Required for accurate and efficient protein synthesis under certain stress conditions. May act as a fidelity factor of the translation reaction, by catalyzing a one-codon backward translocation of tRNAs on improperly translocated ribosomes. Back-translocation proceeds from a post-translocation (POST) complex to a pre-translocation (PRE) complex, thus giving elongation factor G a second chance to translocate the tRNAs correctly. Binds to ribosomes in a GTP-dependent manner. The polypeptide is Elongation factor 4 (Hydrogenobaculum sp. (strain Y04AAS1)).